Here is a 202-residue protein sequence, read N- to C-terminus: Oxopyrrolidines biosynthesis cluster protein O (202 aa).

Functionally, part of the gene cluster that mediates the biosynthesis of oxopyrrolidines, polyketide-amino acid hybrid compounds with feature structures of tetramic acid. Does not seem to play a role in oxopyrrolidines A and B biosynthesis. The chain is Oxopyrrolidines biosynthesis cluster protein O from Penicillium oxalicum (strain 114-2 / CGMCC 5302) (Penicillium decumbens).